Reading from the N-terminus, the 251-residue chain is Ribosomal RNA small subunit methyltransferase J (251 aa).

S-adenosyl-L-methionine-binding positions include R100–D101, E116–R117, and D170.

Belongs to the methyltransferase superfamily. RsmJ family.

It localises to the cytoplasm. The catalysed reaction is guanosine(1516) in 16S rRNA + S-adenosyl-L-methionine = N(2)-methylguanosine(1516) in 16S rRNA + S-adenosyl-L-homocysteine + H(+). Its function is as follows. Specifically methylates the guanosine in position 1516 of 16S rRNA. In Haemophilus ducreyi (strain 35000HP / ATCC 700724), this protein is Ribosomal RNA small subunit methyltransferase J.